Consider the following 95-residue polypeptide: Aspartyl/glutamyl-tRNA(Asn/Gln) amidotransferase subunit C (95 aa).

This sequence belongs to the GatC family. Heterotrimer of A, B and C subunits.

It carries out the reaction L-glutamyl-tRNA(Gln) + L-glutamine + ATP + H2O = L-glutaminyl-tRNA(Gln) + L-glutamate + ADP + phosphate + H(+). The catalysed reaction is L-aspartyl-tRNA(Asn) + L-glutamine + ATP + H2O = L-asparaginyl-tRNA(Asn) + L-glutamate + ADP + phosphate + 2 H(+). In terms of biological role, allows the formation of correctly charged Asn-tRNA(Asn) or Gln-tRNA(Gln) through the transamidation of misacylated Asp-tRNA(Asn) or Glu-tRNA(Gln) in organisms which lack either or both of asparaginyl-tRNA or glutaminyl-tRNA synthetases. The reaction takes place in the presence of glutamine and ATP through an activated phospho-Asp-tRNA(Asn) or phospho-Glu-tRNA(Gln). The polypeptide is Aspartyl/glutamyl-tRNA(Asn/Gln) amidotransferase subunit C (Dehalococcoides mccartyi (strain CBDB1)).